The chain runs to 87 residues: Cytochrome c oxidase subunit 6B1 (87 aa).

Residues Thr28 to Trp74 enclose the CHCH domain. Residues Cys31 to Cys41 carry the Cx9C motif motif. 2 disulfides stabilise this stretch: Cys31–Cys66 and Cys41–Cys55. The Cx10C motif signature appears at Cys55–Cys66.

The protein localises to the mitochondrion intermembrane space. Functionally, connects the two COX monomers into the physiological dimeric form. In Macaca fascicularis (Crab-eating macaque), this protein is Cytochrome c oxidase subunit 6B1 (COX6B1).